The sequence spans 101 residues: Urease subunit beta (101 aa).

This sequence belongs to the urease beta subunit family. As to quaternary structure, heterotrimer of UreA (gamma), UreB (beta) and UreC (alpha) subunits. Three heterotrimers associate to form the active enzyme.

It localises to the cytoplasm. It carries out the reaction urea + 2 H2O + H(+) = hydrogencarbonate + 2 NH4(+). It participates in nitrogen metabolism; urea degradation; CO(2) and NH(3) from urea (urease route): step 1/1. This chain is Urease subunit beta, found in Rhizobium etli (strain ATCC 51251 / DSM 11541 / JCM 21823 / NBRC 15573 / CFN 42).